The chain runs to 419 residues: L-rhamnose isomerase (419 aa).

The Mn(2+) site is built by histidine 262, aspartate 294, and aspartate 296.

This sequence belongs to the rhamnose isomerase family. As to quaternary structure, homotetramer. Mn(2+) is required as a cofactor.

It localises to the cytoplasm. It carries out the reaction L-rhamnopyranose = L-rhamnulose. The protein operates within carbohydrate degradation; L-rhamnose degradation; glycerone phosphate from L-rhamnose: step 1/3. Catalyzes the interconversion of L-rhamnose and L-rhamnulose. The chain is L-rhamnose isomerase from Salmonella paratyphi A (strain AKU_12601).